The primary structure comprises 4684 residues: MVAGMLMPRDQLRAIYEVLFREGVMVAKKDRRPRSLHPHVPGVTNLQVMRAMASLRARGLVRETFAWCHFYWYLTNEGIAHLRQYLHLPPEIVPASLQRVRRPVAMVMPARRTPHVQAVQGPLGSPPKRGPLPTEEQRVYRRKELEEVSPETPVVPATTQRTLARPGPEPAPATDERDRVQKKTFTKWVNKHLIKAQRHISDLYEDLRDGHNLISLLEVLSGDSLPREKGRMRFHKLQNVQIALDYLRHRQVKLVNIRNDDIADGNPKLTLGLIWTIILHFQISDIQVSGQSEDMTAKEKLLLWSQRMVEGYQGLRCDNFTSSWRDGRLFNAIIHRHKPLLIDMNKVYRQTNLENLDQAFSVAERDLGVTRLLDPEDVDVPQPDEKSIITYVSSLYDAMPRVPDVQDGVRANELQLRWQEYRELVLLLLQWMRHHTAAFEERRFPSSFEEIEILWSQFLKFKEMELPAKEADKNRSKGIYQSLEGAVQAGQLKVPPGYHPLDVEKEWGKLHVAILEREKQLRSEFERLECLQRIVTKLQMEAGLCEEQLNQADALLQSDVRLLAAGKVPQRAGEVERDLDKADSMIRLLFNDVQTLKDGRHPQGEQMYRRVYRLHERLVAIRTEYNLRLKAGVAAPATQVAQVTLQSVQRRPELEDSTLRYLQDLLAWVEENQHRVDGAEWGVDLPSVEAQLGSHRGLHQSIEEFRAKIERARSDEGQLSPATRGAYRDCLGRLDLQYAKLLNSSKARLRSLESLHSFVAAATKELMWLNEKEEEEVGFDWSDRNTNMTAKKESYSALMRELELKEKKIKELQNAGDRLLREDHPARPTVESFQAALQTQWSWMLQLCCCIEAHLKENAAYFQFFSDVREAEGQLQKLQEALRRKYSCDRSATVTRLEDLLQDAQDEKEQLNEYKGHLSGLAKRAKAVVQLKPRHPAHPMRGRLPLLAVCDYKQVEVTVHKGDECQLVGPAQPSHWKVLSSSGSEAAVPSVCFLVPPPNQEAQEAVTRLEAQHQALVTLWHQLHVDMKSLLAWQSLRRDVQLIRSWSLATFRTLKPEEQRQALHSLELHYQAFLRDSQDAGGFGPEDRLMAEREYGSCSHHYQQLLQSLEQGAQEESRCQRCISELKDIRLQLEACETRTVHRLRLPLDKEPARECAQRIAEQQKAQAEVEGLGKGVARLSAEAEKVLALPEPSPAAPTLRSELELTLGKLEQVRSLSAIYLEKLKTISLVIRGTQGAEEVLRAHEEQLKEAQAVPATLPELEATKASLKKLRAQAEAQQPTFDALRDELRGAQEVGERLQQRHGERDVEVERWRERVAQLLERWQAVLAQTDVRQRELEQLGRQLRYYRESADPLGAWLQDARRRQEQIQAMPLADSQAVREQLRQEQALLEEIERHGEKVEECQRFAKQYINAIKDYELQLVTYKAQLEPVASPAKKPKVQSGSESVIQEYVDLRTHYSELTTLTSQYIKFISETLRRMEEEERLAEQQRAEERERLAEVEAALEKQRQLAEAHAQAKAQAEREAKELQQRMQEEVVRREEAAVDAQQQKRSIQEELQQLRQSSEAEIQAKARQAEAAERSRLRIEEEIRVVRLQLEATERQRGGAEGELQALRARAEEAEAQKRQAQEEAERLRRQVQDESQRKRQAEVELASRVKAEAEAAREKQRALQALEELRLQAEEAERRLRQAEVERARQVQVALETAQRSAEAELQSKRASFAEKTAQLERSLQEEHVAVAQLREEAERRAQQQAEAERAREEAERELERWQLKANEALRLRLQAEEVAQQKSLAQAEAEKQKEEAEREARRRGKAEEQAVRQRELAEQELEKQRQLAEGTAQQRLAAEQELIRLRAETEQGEQQRQLLEEELARLQREAAAATQKRQELEAELAKVRAEMEVLLASKARAEEESRSTSEKSKQRLEAEAGRFRELAEEAARLRALAEEAKRQRQLAEEDAARQRAEAERVLAEKLAAIGEATRLKTEAEIALKEKEAENERLRRLAEDEAFQRRRLEEQAAQHKADIEERLAQLRKASDSELERQKGLVEDTLRQRRQVEEEILALKASFEKAAAGKAELELELGRIRSNAEDTLRSKEQAELEAARQRQLAAEEERRRREAEERVQKSLAAEEEAARQRKAALEEVERLKAKVEEARRLRERAEQESARQLQLAQEAAQKRLQAEEKAHAFAVQQKEQELQQTLQQEQSVLDQLRGEAEAARRAAEEAEEARVQAEREAAQSRRQVEEAERLKQSAEEQAQARAQAQAAAEKLRKEAEQEAARRAQAEQAALRQKQAADAEMEKHKKFAEQTLRQKAQVEQELTTLRLQLEETDHQKNLLDEELQRLKAEATEAARQRSQVEEELFSVRVQMEELSKLKARIEAENRALILRDKDNTQRFLQEEAEKMKQVAEEAARLSVAAQEAARLRQLAEEDLAQQRALAEKMLKEKMQAVQEATRLKAEAELLQQQKELAQEQARRLQEDKEQMAQQLAEETQGFQRTLEAERQRQLEMSAEAERLKLRVAEMSRAQARAEEDAQRFRKQAEEIGEKLHRTELATQEKVTLVQTLEIQRQQSDHDAERLREAIAELEREKEKLQQEAKLLQLKSEEMQTVQQEQLLQETQALQQSFLSEKDSLLQRERFIEQEKAKLEQLFQDEVAKAQQLREEQQRQQQQMEQERQRLVASMEEARRRQHEAEEGVRRKQEELQQLEQQRRQQEELLAEENQRLREQLQLLEEQHRAALAHSEEVTASQVAATKTLPNGRDALDGPAAEAEPEHSFDGLRRKVSAQRLQEAGILSAEELQRLAQGHTTVDELARREDVRHYLQGRSSIAGLLLKATNEKLSVYAALQRQLLSPGTALILLEAQAASGFLLDPVRNRRLTVNEAVKEGVVGPELHHKLLSAERAVTGYKDPYTGQQISLFQAMQKGLIVREHGIRLLEAQIATGGVIDPVHSHRVPVDVAYRRGYFDEEMNRVLADPSDDTKGFFDPNTHENLTYLQLLERCVEDPETGLCLLPLTDKAAKGGELVYTDSEARDVFEKATVSAPFGKFQGKTVTIWEIINSEYFTAEQRRDLLRQFRTGRITVEKIIKIIITVVEEQEQKGRLCFEGLRSLVPAAELLESRVIDRELYQQLQRGERSVRDVAEVDTVRRALRGANVIAGVWLEEAGQKLSIYNALKKDLLPSDMAVALLEAQAGTGHIIDPATSARLTVDEAVRAGLVGPEFHEKLLSAEKAVTGYRDPYTGQSVSLFQALKKGLIPREQGLRLLDAQLSTGGIVDPSKSHRVPLDVACARGCLDEETSRALSAPRADAKAYSDPSTGEPATYGELQQRCRPDQLTGLSLLPLSEKAARARQEELYSELQARETFEKTPVEVPVGGFKGRTVTVWELISSEYFTAEQRQELLRQFRTGKVTVEKVIKILITIVEEVETLRQERLSFSGLRAPVPASELLASGVLSRAQFEQLKDGKTTVKDLSELGSVRTLLQGSGCLAGIYLEDTKEKVSIYEAMRRGLLRATTAALLLEAQAATGFLVDPVRNQRLYVHEAVKAGVVGPELHEQLLSAEKAVTGYRDPYSGSTISLFQAMQKGLVLRQHGIRLLEAQIATGGIIDPVHSHRVPVDVAYQRGYFSEEMNRVLADPSDDTKGFFDPNTHENLTYRQLLERCVEDPETGLRLLPLKGAEKAEVVETTQVYTEEETRRAFEETQIDIPGGGSHGGSTMSLWEVMQSDLIPEEQRAQLMADFQAGRVTKERMIIIIIEIIEKTEIIRQQGLASYDYVRRRLTAEDLFEARIISLETYNLLREGTRSLREALEAESAWCYLYGTGSVAGVYLPGSRQTLSIYQALKKGLLSAEVARLLLEAQAATGFLLDPVKGERLTVDEAVRKGLVGPELHDRLLSAERAVTGYRDPYTEQTISLFQAMKKELIPTEEALRLLDAQLATGGIVDPRLGFHLPLEVAYQRGYLNKDTHDQLSEPSEVRSYVDPSTDERLSYTQLLRRCRRDDGTGQLLLPLSDARKLTFRGLRKQITMEELVRSQVMDEATALQLREGLTSIEEVTKNLQKFLEGTSCIAGVFVDATKERLSVYQAMKKGIIRPGTAFELLEAQAATGYVIDPIKGLKLTVEEAVRMGIVGPEFKDKLLSAERAVTGYKDPYSGKLISLFQAMKKGLILKDHGIRLLEAQIATGGIIDPEESHRLPVEVAYKRGLFDEEMNEILTDPSDDTKGFFDPNTEENLTYLQLMERCITDPQTGLCLLPLKEKKRERKTSSKSSVRKRRVVIVDPETGKEMSVYEAYRKGLIDHQTYLELSEQECEWEEITISSSDGVVKSMIIDRRSGRQYDIDDAIAKNLIDRSALDQYRAGTLSITEFADMLSGNAGGFRSRSSSVGSSSSYPISPAVSRTQLASWSDPTEETGPVAGILDTETLEKVSITEAMHRNLVDNITGQRLLEAQACTGGIIDPSTGERFPVTDAVNKGLVDKIMVDRINLAQKAFCGFEDPRTKTKMSAAQALKKGWLYYEAGQRFLEVQYLTGGLIEPDTPGRVPLDEALQRGTVDARTAQKLRDVGAYSKYLTCPKTKLKISYKDALDRSMVEEGTGLRLLEAAAQSTKGYYSPYSVSGSGSTAGSRTGSRTGSRAGSRRGSFDATGSGFSMTFSSSSYSSSGYGRRYASGSSASLGGPESAVA.

The globular 1 stretch occupies residues 1–1470 (MVAGMLMPRD…SELTTLTSQY (1470 aa)). Phosphoserine is present on residues F20 and R21. V26 is subject to Phosphotyrosine. At G42 the chain carries Phosphoserine. T113 carries the phosphothreonine modification. S125 and S149 each carry phosphoserine. The tract at residues 144 to 179 (ELEEVSPETPVVPATTQRTLARPGPEPAPATDERDR) is disordered. Positions 175–400 (DERDRVQKKT…YVSSLYDAMP (226 aa)) are actin-binding. 2 consecutive Calponin-homology (CH) domains span residues 179 to 282 (RVQK…LHFQ) and 295 to 400 (MTAK…DAMP). One copy of the Spectrin 1 repeat lies at 645–710 (LQSVQRRPEL…SIEEFRAKIE (66 aa)). S720 is modified (phosphoserine). Spectrin repeat units follow at residues 740 to 824 (KLLN…REDH) and 837 to 930 (LQTQ…AVVQ). Residues 941–998 (RGRLPLLAVCDYKQVEVTVHKGDECQLVGPAQPSHWKVLSSSGSEAAVPSVCFLVPPP) enclose the SH3 domain. The interval 964–4574 (ECQLVGPAQP…VGAYSKYLTC (3611 aa)) is required for interaction with intermediate filament proteins. Residue S1047 is modified to Phosphoserine. The Spectrin 4 repeat unit spans residues 1315-1415 (RERVAQLLER…QRFAKQYINA (101 aa)). S1435 carries the phosphoserine modification. Positions 1469 to 2756 (QYIKFISETL…AHSEEVTASQ (1288 aa)) form a coiled coil. Positions 1471-2755 (IKFISETLRR…LAHSEEVTAS (1285 aa)) are central fibrous rod domain. Residues 1618 to 1650 (RAEEAEAQKRQAQEEAERLRRQVQDESQRKRQA) are disordered. Position 1721 is a phosphoserine (S1721). Position 1725 is an N6-acetyllysine (K1725). S1732 carries the phosphoserine modification. Disordered regions lie at residues 1794–1836 (LAQA…KQRQ), 2105–2139 (EAARQRQLAAEEERRRREAEERVQKSLAAEEEAAR), and 2217–2307 (RGEA…MEKH). Basic and acidic residues-rich tracts occupy residues 1798 to 1836 (EAEKQKEEAEREARRRGKAEEQAVRQRELAEQELEKQRQ), 2105 to 2128 (EAARQRQLAAEEERRRREAEERVQ), and 2217 to 2258 (RGEA…KQSA). Low complexity predominate over residues 2259–2272 (EEQAQARAQAQAAA). Positions 2273 to 2288 (EKLRKEAEQEAARRAQ) are enriched in basic and acidic residues. A Phosphoserine modification is found at S2631. The residue at position 2636 (K2636) is an N6-acetyllysine. 2 disordered regions span residues 2668 to 2707 (REEQQRQQQQMEQERQRLVASMEEARRRQHEAEEGVRRKQ) and 2763 to 2784 (LPNGRDALDGPAAEAEPEHSFD). Residues 2679-2707 (EQERQRLVASMEEARRRQHEAEEGVRRKQ) are compositionally biased toward basic and acidic residues. A globular 2 region spans residues 2756–4684 (QVAATKTLPN…SLGGPESAVA (1929 aa)). Phosphoserine is present on residues S2782 and S2802. 5 Plectin repeats span residues 2826 to 2863 (RHYLQGRSSIAGLLLKATNEKLSVYAALQRQLLSPGTA), 2864 to 2901 (LILLEAQAASGFLLDPVRNRRLTVNEAVKEGVVGPELH), 2902 to 2939 (HKLLSAERAVTGYKDPYTGQQISLFQAMQKGLIVREHG), 2940 to 2977 (IRLLEAQIATGGVIDPVHSHRVPVDVAYRRGYFDEEMN), and 2981 to 3015 (ADPSDDTKGFFDPNTHENLTYLQLLERCVEDPETG). The residue at position 2886 (T2886) is a Phosphothreonine. Residue Y3033 is modified to Phosphotyrosine. The residue at position 3036 (S3036) is a Phosphoserine. An N6-acetyllysine mark is found at K3053 and K3091. 6 Plectin repeats span residues 3116–3153 (SLVPAAELLESRVIDRELYQQLQRGERSVRDVAEVDTV), 3154–3191 (RRALRGANVIAGVWLEEAGQKLSIYNALKKDLLPSDMA), 3192–3229 (VALLEAQAGTGHIIDPATSARLTVDEAVRAGLVGPEFH), 3230–3267 (EKLLSAEKAVTGYRDPYTGQSVSLFQALKKGLIPREQG), 3268–3305 (LRLLDAQLSTGGIVDPSKSHRVPLDVACARGCLDEETS), and 3306–3343 (RALSAPRADAKAYSDPSTGEPATYGELQQRCRPDQLTG). Residues 3310 to 3331 (APRADAKAYSDPSTGEPATYGE) form a disordered region. A Phosphotyrosine modification is found at Y3362. The residue at position 3420 (K3420) is an N6-acetyllysine. Plectin repeat units lie at residues 3485–3522 (RTLLQGSGCLAGIYLEDTKEKVSIYEAMRRGLLRATTA), 3523–3560 (ALLLEAQAATGFLVDPVRNQRLYVHEAVKAGVVGPELH), 3561–3598 (EQLLSAEKAVTGYRDPYSGSTISLFQAMQKGLVLRQHG), 3599–3636 (IRLLEAQIATGGIIDPVHSHRVPVDVAYQRGYFSEEMN), and 3640–3674 (ADPSDDTKGFFDPNTHENLTYRQLLERCVEDPETG). S3580 bears the Phosphoserine mark. Residue T3785 is modified to Phosphothreonine. Plectin repeat units follow at residues 3820–3857 (WCYLYGTGSVAGVYLPGSRQTLSIYQALKKGLLSAEVA), 3858–3895 (RLLLEAQAATGFLLDPVKGERLTVDEAVRKGLVGPELH), 3896–3933 (DRLLSAERAVTGYRDPYTEQTISLFQAMKKELIPTEEA), 3934–3971 (LRLLDAQLATGGIVDPRLGFHLPLEVAYQRGYLNKDTH), and 3975–4008 (SEPSEVRSYVDPSTDERLSYTQLLRRCRRDDGTG). The interval 3956-4293 (PLEVAYQRGY…ETGKEMSVYE (338 aa)) is required for interaction with type2 keratins, DES and VIM. A Phosphothreonine modification is found at T4030. A Phosphoserine modification is found at S4054. Plectin repeat units follow at residues 4063–4100 (QKFLEGTSCIAGVFVDATKERLSVYQAMKKGIIRPGTA), 4101–4138 (FELLEAQAATGYVIDPIKGLKLTVEEAVRMGIVGPEFK), 4139–4176 (DKLLSAERAVTGYKDPYSGKLISLFQAMKKGLILKDHG), 4177–4214 (IRLLEAQIATGGIIDPEESHRLPVEVAYKRGLFDEEMN), 4218–4252 (TDPSDDTKGFFDPNTEENLTYLQLMERCITDPQTG), 4265–4305 (RKTS…HQTY), and 4319–4356 (TISSSDGVVKSMIIDRRSGRQYDIDDAIAKNLIDRSAL). The tract at residues 4250-4300 (QTGLCLLPLKEKKRERKTSSKSSVRKRRVVIVDPETGKEMSVYEAYRKGLI) is binding to intermediate filaments. S4382, S4384, S4385, S4386, S4389, S4390, S4391, and S4392 each carry phosphoserine. Position 4393 is a phosphotyrosine (Y4393). S4396, S4400, and S4406 each carry phosphoserine. 5 Plectin repeats span residues 4408–4445 (SDPTEETGPVAGILDTETLEKVSITEAMHRNLVDNITG), 4446–4483 (QRLLEAQACTGGIIDPSTGERFPVTDAVNKGLVDKIMV), 4484–4521 (DRINLAQKAFCGFEDPRTKTKMSAAQALKKGWLYYEAG), 4522–4559 (QRFLEVQYLTGGLIEPDTPGRVPLDEALQRGTVDARTA), and 4560–4597 (QKLRDVGAYSKYLTCPKTKLKISYKDALDRSMVEEGTG). At T4411 the chain carries Phosphothreonine. Positions 4505–4574 (MSAAQALKKG…VGAYSKYLTC (70 aa)) are required for efficient interaction with KRT5 and KRT14 heterodimers. At T4539 the chain carries Phosphothreonine; by CDK1. 2 positions are modified to phosphoserine: S4607 and S4613. Residues 4611 to 4678 (YYSPYSVSGS…ASGSSASLGG (68 aa)) are compositionally biased toward low complexity. Residues 4611-4684 (YYSPYSVSGS…SLGGPESAVA (74 aa)) form a disordered region. Phosphotyrosine is present on Y4615. Phosphoserine is present on residues S4616, S4618, and S4622. Phosphothreonine is present on T4623. The 4 X 4 AA tandem repeats of G-S-R-X stretch occupies residues 4625–4640 (GSRTGSRTGSRAGSRR). The residue at position 4626 (S4626) is a Phosphoserine. Residues R4627 and R4640 each carry the omega-N-methylarginine modification. 3 positions are modified to phosphoserine: S4642, S4672, and S4675.

The protein belongs to the plakin or cytolinker family. Homodimer or homotetramer. Interacts (via actin-binding domain) with SYNE3. Interacts (via calponin-homology (CH) 1 domain) with VIM (via rod region). Interacts (via N-terminus) with DST isoform 2 (via N-terminus). Interacts with FER. Interacts with TOR1A. Interacts with ANK3. Identified in complexes that contain VIM, EZR, AHNAK, BFSP1, BFSP2, ANK2, PLEC, PRX and spectrin. Interacts with COL17A1. As to quaternary structure, interacts with KRT14, heterodimers consisting of KRT8 and KRT18, heterodimers consisting of KRT5 and KRT14, heterodimers consisting of KRT14 and KRT15, and heterodimers consisting of KRT1 and KRT10. Interacts with DES and VIM. In terms of processing, phosphorylated by CDK1; regulates dissociation from intermediate filaments during mitosis. Widely expressed with highest levels in muscle, heart, placenta and spinal cord.

The protein resides in the cytoplasm. It is found in the cytoskeleton. It localises to the cell junction. Its subcellular location is the hemidesmosome. The protein localises to the cell projection. The protein resides in the podosome. Functionally, interlinks intermediate filaments with microtubules and microfilaments and anchors intermediate filaments to desmosomes or hemidesmosomes. Could also bind muscle proteins such as actin to membrane complexes in muscle. May be involved not only in the filaments network, but also in the regulation of their dynamics. Structural component of muscle. Isoform 9 plays a major role in the maintenance of myofiber integrity. In Homo sapiens (Human), this protein is Plectin (PLEC).